Consider the following 548-residue polypeptide: Leucine-rich repeat LGI family member 3 (548 aa).

Positions 1–30 (MAGLRARRGPGRRLLVLSTLGFCLMLQVSA) are cleaved as a signal peptide. An LRRNT domain is found at 31 to 64 (KRPPKTPPCPPSCSCTRDTAFCVDSKSVPKNLPS). LRR repeat units follow at residues 89-110 (LLQFLLLNSNKFTLIGDNAFIG), 113-134 (HLQYLFIENNDIWALSKFTFRG), and 137-158 (SLTHLSLANNNLQTLPRDIFRP). In terms of domain architecture, LRRCT spans 170–220 (NALNCDCKVKWLVEWLAHTNTTVAPIYCASPPRFQEHKVQDLPLREFDCIT). Asparagine 189 is a glycosylation site (N-linked (GlcNAc...) asparagine). EAR repeat units lie at residues 222–264 (DFVL…KWDY) and 268–310 (QLRD…HWDP). An N-linked (GlcNAc...) asparagine glycan is attached at asparagine 311. EAR repeat units lie at residues 314-361 (RFTK…RWHQ), 363-406 (GFYS…QWSR), 410-453 (QFVA…RWEG), 455-497 (RFSE…QWDE), and 501-543 (KFVR…RHVV).

As to quaternary structure, interacts with STX1A. As to expression, brain.

Its subcellular location is the secreted. It is found in the cytoplasmic vesicle. It localises to the secretory vesicle. The protein resides in the synaptic vesicle. The protein localises to the synapse. Its subcellular location is the synaptosome. It is found in the cell projection. It localises to the axon. May participate in the regulation of neuronal exocytosis. This chain is Leucine-rich repeat LGI family member 3 (Lgi3), found in Mus musculus (Mouse).